The chain runs to 386 residues: N-acetylneuraminate epimerase (386 aa).

A signal peptide spans 1 to 29 (MGMQMKNFKKMMTLMALCFSVAITTSGYA). Kelch repeat units follow at residues 51 to 95 (VIYV…VFLN), 97 to 149 (ELYV…VKLN), 151 to 186 (TMVL…KVIY), 187 to 232 (NYFN…VMGN), 235 to 284 (LMLI…LAGA), 306 to 355 (QNYT…SYGD), and 357 to 386 (VFLI…LLIK). Glu-241 functions as the Proton acceptor in the catalytic mechanism.

This sequence belongs to the NanM family. In terms of assembly, homodimer.

Its subcellular location is the periplasm. The enzyme catalyses N-acetyl-alpha-neuraminate = N-acetyl-beta-neuraminate. Converts alpha-N-acetylneuranimic acid (Neu5Ac) to the beta-anomer, accelerating the equilibrium between the alpha- and beta-anomers. Probably facilitates sialidase-negative bacteria to compete successfully for limited amounts of extracellular Neu5Ac, which is likely taken up in the beta-anomer. In addition, the rapid removal of sialic acid from solution might be advantageous to the bacterium to damp down host responses. The sequence is that of N-acetylneuraminate epimerase from Salmonella typhimurium (strain LT2 / SGSC1412 / ATCC 700720).